A 59-amino-acid chain; its full sequence is Large ribosomal subunit protein uL30 (59 aa).

Belongs to the universal ribosomal protein uL30 family. In terms of assembly, part of the 50S ribosomal subunit.

The protein is Large ribosomal subunit protein uL30 of Persephonella marina (strain DSM 14350 / EX-H1).